A 280-amino-acid polypeptide reads, in one-letter code: UDP-3-O-acyl-N-acetylglucosamine deacetylase (280 aa).

The Zn(2+) site is built by His79, His237, and Asp241. The active-site Proton donor is the His264.

Belongs to the LpxC family. It depends on Zn(2+) as a cofactor.

The catalysed reaction is a UDP-3-O-[(3R)-3-hydroxyacyl]-N-acetyl-alpha-D-glucosamine + H2O = a UDP-3-O-[(3R)-3-hydroxyacyl]-alpha-D-glucosamine + acetate. It functions in the pathway glycolipid biosynthesis; lipid IV(A) biosynthesis; lipid IV(A) from (3R)-3-hydroxytetradecanoyl-[acyl-carrier-protein] and UDP-N-acetyl-alpha-D-glucosamine: step 2/6. Functionally, catalyzes the hydrolysis of UDP-3-O-myristoyl-N-acetylglucosamine to form UDP-3-O-myristoylglucosamine and acetate, the committed step in lipid A biosynthesis. The chain is UDP-3-O-acyl-N-acetylglucosamine deacetylase from Chlamydia felis (strain Fe/C-56) (Chlamydophila felis).